The primary structure comprises 465 residues: Tapasin (465 aa).

An N-terminal signal peptide occupies residues 1–23 (MKPLLLLVAVALGLATVVSVVSA). Residues 24–416 (GPEAIECWFV…GFSGPSIEDG (393 aa)) are Lumenal-facing. Cysteine 30 and cysteine 94 are disulfide-bonded. Asparagine 256 is a glycosylation site (N-linked (GlcNAc...) asparagine). One can recognise an Ig-like C1-type domain in the interval 295-402 (PRVSLTPAPV…PASGRSADVT (108 aa)). Cysteine 318 and cysteine 385 are disulfide-bonded. A helical transmembrane segment spans residues 417–437 (IGLFLSAFLLLGLLKVLGWLA). The Cytoplasmic portion of the chain corresponds to 438–465 (AYWTIPEVSKEKATAASLTIPRNSKKSQ).

As to quaternary structure, heterodimer with PDIA3; disulfide-linked. Obligatory mediator for the interaction between newly assembled MHC class I molecules, calreticulin, PDIA3 and TAP. Up to 4 MHC class I/tapasin complexes bind to 1 TAP. Interacts with HLA-G-B2M complex; this interaction is required for loading of high affinity peptides. On its own or as part of MHC class I peptide loading complex, interacts with ligand-free MR1 or MR1-B2M complex, providing for stable MR1 pools ready for metabolite antigen processing.

The protein localises to the endoplasmic reticulum membrane. Functionally, involved in the association of MHC class I with transporter associated with antigen processing (TAP) and in the assembly of MHC class I with peptide (peptide loading). The sequence is that of Tapasin (Tapbp) from Mus musculus (Mouse).